The primary structure comprises 277 residues: Venom serine protease (277 aa).

A signal peptide spans 1–19; sequence MNCGKIILLFITIIGVAKS. The 236-residue stretch at 34–269 folds into the Peptidase S1 domain; it reads IVNGVETEIN…FMEFIHNATI (236 aa). A disulfide bond links Cys-60 and Cys-76. His-75 serves as the catalytic Charge relay system. N-linked (GlcNAc...) asparagine glycans are attached at residues Asn-84 and Asn-104. The active-site Charge relay system is the Asp-126. Residues Asn-155 and Asn-158 are each glycosylated (N-linked (GlcNAc...) asparagine). 2 disulfides stabilise this stretch: Cys-192–Cys-207 and Cys-216–Cys-246. An N-linked (GlcNAc...) asparagine glycan is attached at Asn-218. Ser-220 acts as the Charge relay system in catalysis. N-linked (GlcNAc...) asparagine glycosylation is present at Asn-266.

Belongs to the peptidase S1 family. As to expression, expressed by the venom duct.

Its subcellular location is the secreted. In Polistes dominula (European paper wasp), this protein is Venom serine protease.